The following is a 228-amino-acid chain: Ribose-5-phosphate isomerase A (228 aa).

Substrate contacts are provided by residues 27 to 30, 86 to 89, and 100 to 103; these read TGTT, DGAD, and KGMG. The active-site Proton acceptor is Glu-109. Position 127 (Lys-127) interacts with substrate.

Belongs to the ribose 5-phosphate isomerase family. Homodimer.

It carries out the reaction aldehydo-D-ribose 5-phosphate = D-ribulose 5-phosphate. It participates in carbohydrate degradation; pentose phosphate pathway; D-ribose 5-phosphate from D-ribulose 5-phosphate (non-oxidative stage): step 1/1. Functionally, catalyzes the reversible conversion of ribose-5-phosphate to ribulose 5-phosphate. The chain is Ribose-5-phosphate isomerase A from Borreliella burgdorferi (strain ZS7) (Borrelia burgdorferi).